Reading from the N-terminus, the 601-residue chain is MTTQAPPSALLPLNPEQLARLQAATTDLSPTQLAWVSGYFWGMLNQQPGTLAATPAPVAEMPGITLISASQTGNARRVAEALRDDLLAAKLSVTLVNAGDYKFKQIANEKLLVVVASTQGEGEPPEEAVALRKFLFSKKAPKLDNTAFAVFGLGDTSYEFFCQAGKDFDSKLAELGGERLLDRVDADVEYQAAAQEWRARVVDVLKARAPSASAAQVAVAATGAVNDVHSSPYTKEAPLSASLAVNQKITGRDSEKDVRHIEIDLGDSGLRYQPGDALGVWYQNDPELVKEIVELVWLKGTEPVTVNGKVLPLAEALQWHFELTVNTANIVENYATLTRSESLLPLVGDKAQLQHYAATTPIVDMLRFSPAQLDADALVGLLRPLTPRLYSIASSQAEVESEVHITVGAVRYEIEGRARAGGASSFLADRVEEEGEVRVFIEHNDNFRLPANPETPVIMIGPGTGIAPFRAFMQQRAADEAPGKNWLFFGNPHFTEDFLYQVEWQRYVKEGVLSRIDLAWSRDQKEKIYVQDKLREQGAELWRWINDGAHIYVCGDANCMAKDVEQALLEVIAEFGGMDAEAADEFLSELRVERRYQRDVY.

Residues 64–202 enclose the Flavodoxin-like domain; sequence ITLISASQTG…AAQEWRARVV (139 aa). FMN contacts are provided by residues 70–75, 117–120, and 153–162; these read SQTGNA, STQG, and LGDTSYEFFC. The region spanning 236–450 is the FAD-binding FR-type domain; that stretch reads EAPLSASLAV…IEHNDNFRLP (215 aa). Residues threonine 324, alanine 358, 388–391, 406–408, tyrosine 412, and 421–424 contribute to the FAD site; these read RLYS, TVG, and GGAS. Residues 521–522, 527–531, and aspartate 563 each bind NADP(+); these read SR and KIYVQ. An FAD-binding site is contributed by tyrosine 601.

Belongs to the NADPH-dependent sulphite reductase flavoprotein subunit CysJ family. This sequence in the N-terminal section; belongs to the flavodoxin family. It in the C-terminal section; belongs to the flavoprotein pyridine nucleotide cytochrome reductase family. Alpha(8)-beta(8). The alpha component is a flavoprotein, the beta component is a hemoprotein. Requires FAD as cofactor. The cofactor is FMN.

It catalyses the reaction hydrogen sulfide + 3 NADP(+) + 3 H2O = sulfite + 3 NADPH + 4 H(+). It participates in sulfur metabolism; hydrogen sulfide biosynthesis; hydrogen sulfide from sulfite (NADPH route): step 1/1. In terms of biological role, component of the sulfite reductase complex that catalyzes the 6-electron reduction of sulfite to sulfide. This is one of several activities required for the biosynthesis of L-cysteine from sulfate. The flavoprotein component catalyzes the electron flow from NADPH -&gt; FAD -&gt; FMN to the hemoprotein component. The protein is Sulfite reductase [NADPH] flavoprotein alpha-component of Citrobacter koseri (strain ATCC BAA-895 / CDC 4225-83 / SGSC4696).